Reading from the N-terminus, the 153-residue chain is D-aminoacyl-tRNA deacylase (153 aa).

The Gly-cisPro motif, important for rejection of L-amino acids signature appears at 142–143 (GP).

This sequence belongs to the DTD family. In terms of assembly, homodimer.

The protein resides in the cytoplasm. The enzyme catalyses glycyl-tRNA(Ala) + H2O = tRNA(Ala) + glycine + H(+). It carries out the reaction a D-aminoacyl-tRNA + H2O = a tRNA + a D-alpha-amino acid + H(+). Functionally, an aminoacyl-tRNA editing enzyme that deacylates mischarged D-aminoacyl-tRNAs. Also deacylates mischarged glycyl-tRNA(Ala), protecting cells against glycine mischarging by AlaRS. Acts via tRNA-based rather than protein-based catalysis; rejects L-amino acids rather than detecting D-amino acids in the active site. By recycling D-aminoacyl-tRNA to D-amino acids and free tRNA molecules, this enzyme counteracts the toxicity associated with the formation of D-aminoacyl-tRNA entities in vivo and helps enforce protein L-homochirality. The polypeptide is D-aminoacyl-tRNA deacylase (Cupriavidus taiwanensis (strain DSM 17343 / BCRC 17206 / CCUG 44338 / CIP 107171 / LMG 19424 / R1) (Ralstonia taiwanensis (strain LMG 19424))).